Consider the following 861-residue polypeptide: Leucine--tRNA ligase (861 aa).

The 'HIGH' region signature appears at 42 to 52 (PYPSGRIHMGH). A 'KMSKS' region motif is present at residues 623–627 (KMSKS). Residue lysine 626 coordinates ATP.

It belongs to the class-I aminoacyl-tRNA synthetase family.

It localises to the cytoplasm. It catalyses the reaction tRNA(Leu) + L-leucine + ATP = L-leucyl-tRNA(Leu) + AMP + diphosphate. The chain is Leucine--tRNA ligase from Caulobacter sp. (strain K31).